Here is a 205-residue protein sequence, read N- to C-terminus: Isochorismatase domain-containing protein 2 (205 aa).

It belongs to the isochorismatase family.

The sequence is that of Isochorismatase domain-containing protein 2 (isoc2) from Xenopus laevis (African clawed frog).